A 312-amino-acid chain; its full sequence is HTH-type transcriptional regulator TdcA (312 aa).

The 58-residue stretch at 7–64 folds into the HTH lysR-type domain; it reads PKTQHLVVFQEVIRSGSIGSAAKELGLTQPAVSKIINDIEDYFGVELVVRKNTGVTLT. The H-T-H motif DNA-binding region spans 24–43; that stretch reads IGSAAKELGLTQPAVSKIIN.

It belongs to the LysR transcriptional regulatory family.

The protein operates within amino-acid degradation; L-threonine degradation via propanoate pathway [regulation]. In terms of biological role, transcriptional activator for the tdcABCDE operon. The chain is HTH-type transcriptional regulator TdcA (tdcA) from Escherichia coli O157:H7.